A 137-amino-acid polypeptide reads, in one-letter code: Putative pre-16S rRNA nuclease (137 aa).

This sequence belongs to the YqgF nuclease family.

It is found in the cytoplasm. Could be a nuclease involved in processing of the 5'-end of pre-16S rRNA. This Chromobacterium violaceum (strain ATCC 12472 / DSM 30191 / JCM 1249 / CCUG 213 / NBRC 12614 / NCIMB 9131 / NCTC 9757 / MK) protein is Putative pre-16S rRNA nuclease.